The primary structure comprises 45 residues: Thymosin beta (45 aa).

Positions 1–45 (MADKPNMTEITSFDKTKLRKTETQEKNPLPTKETIEQERQGESTP) are disordered. 2 stretches are compositionally biased toward basic and acidic residues: residues 12–25 (SFDK…ETQE) and 33–45 (ETIE…ESTP).

The protein belongs to the thymosin beta family.

It is found in the cytoplasm. Its subcellular location is the cytoskeleton. Plays an important role in the organization of the cytoskeleton. Binds to and sequesters actin monomers (G actin) and therefore inhibits actin polymerization. The chain is Thymosin beta (tmsb) from Danio rerio (Zebrafish).